The primary structure comprises 505 residues: Beta-glucosidase 18 (505 aa).

The first 26 residues, 1 to 26 (MAGGSKTRIHASLVSTLLLLLPLASA), serve as a signal peptide directing secretion. Residue Gln46 participates in a beta-D-glucoside binding. Asn55 is a glycosylation site (N-linked (GlcNAc...) asparagine). Residues His148 and 193 to 194 (NE) contribute to the a beta-D-glucoside site. Glu194 (proton donor) is an active-site residue. An intrachain disulfide couples Cys213 to Cys220. An a beta-D-glucoside-binding site is contributed by Tyr337. An intrachain disulfide couples Cys345 to Cys350. A beta-D-glucoside-binding positions include Glu408, Trp457, 464–465 (EW), and Phe473. Residue Glu408 is the Nucleophile of the active site.

This sequence belongs to the glycosyl hydrolase 1 family. As to expression, expressed in roots, leaves, flowers and pollen.

The catalysed reaction is Hydrolysis of terminal, non-reducing beta-D-glucosyl residues with release of beta-D-glucose.. Hydrolyzes glycosides and monolignol glucosides. Can hydrolyze para-nitrophenyl beta-D-glucopyranoside (pNPGlc) in vitro. Hydrolyzes para-nitrophenyl beta-D-fucopyranoside, para-nitrophenyl beta-D-galactopyranoside and para-nitrophenyl beta-D-xylopyranoside in vitro. Hydrolyzes the monolignol glucosides coniferin and syringin with high catalytic efficiencies. The sequence is that of Beta-glucosidase 18 from Oryza sativa subsp. japonica (Rice).